The sequence spans 298 residues: Cyclin-dependent kinase 2 homolog (298 aa).

The Protein kinase domain maps to 4–284; that stretch reads YHKMEKIGEG…AKEALKHDYF (281 aa). ATP contacts are provided by residues 10–18 and K32; that span reads IGEGTYGVV. Residue T14 is modified to Phosphothreonine. Residue Y15 is modified to Phosphotyrosine. Catalysis depends on D125, which acts as the Proton acceptor. A Phosphothreonine modification is found at T158.

It belongs to the protein kinase superfamily. CMGC Ser/Thr protein kinase family. CDC2/CDKX subfamily. In terms of assembly, may form a complex composed of at least the catalytic subunit CRK2 and a cyclin. Mg(2+) is required as a cofactor.

The protein resides in the cytoplasm. It carries out the reaction L-seryl-[protein] + ATP = O-phospho-L-seryl-[protein] + ADP + H(+). The enzyme catalyses L-threonyl-[protein] + ATP = O-phospho-L-threonyl-[protein] + ADP + H(+). It catalyses the reaction [DNA-directed RNA polymerase] + ATP = phospho-[DNA-directed RNA polymerase] + ADP + H(+). Phosphorylation at Thr-14 or Tyr-15 inactivates the enzyme, while phosphorylation at Thr-158 activates it. Functionally, serine/threonine-protein kinase. Involved in the control of the cell cycle. Required for entry into S-phase and mitosis. Probable component of the kinase complex that phosphorylates the repetitive C-terminus of RNA polymerase II. The protein is Cyclin-dependent kinase 2 homolog of Theileria parva (East coast fever infection agent).